Consider the following 419-residue polypeptide: Putative nucleobase-ascorbate transporter 9 (419 aa).

The segment covering Met1–Gly22 has biased composition (gly residues). Positions Met1–Glu28 are disordered. 10 consecutive transmembrane segments (helical) span residues Leu64 to Gly84, Val91 to Thr111, Leu113 to Ser133, Ile153 to Trp173, Ser184 to Val204, Gly220 to Val240, Ser273 to Ala293, Arg313 to Ala333, Phe334 to Val354, and Phe370 to Phe390.

Belongs to the nucleobase:cation symporter-2 (NCS2) (TC 2.A.40) family.

The protein resides in the membrane. The polypeptide is Putative nucleobase-ascorbate transporter 9 (NAT9) (Arabidopsis thaliana (Mouse-ear cress)).